We begin with the raw amino-acid sequence, 682 residues long: MIDQYKHQQLQIGLVSPQQIKAWANKTLPNGEVVGEVTRPSTFHYKTDKPEKDGLFCERIFGPIKSRICACGNSRASGAENEDERFCQKCGVEFVDSRIRRYQMGYIKLACPVTHVWYLKGLPSYIANLLDKPLKKLEGLVYGDFSFARPSAKKPTFLRLRGLFEDEISSCNHSISPFFSTPGFTTFRNREIATGAGAIREQLADLDLRIILENSSVEWKELEDEGYSGDEWEDRKRRIRKVFLIRRMQLAKHFIQTNVEPEWMVLCLLPVLPPELRPIVYRSGDKVVTSDINELYKRVIRRNNNLAYLLKRSELAPADLVMCQEKLVQEAVDTLLDSGSRGQPTRDGHNKVYKSLSDVIEGKEGRFRETLLGKRVDYSGRSVIVVGPSLSLHQCGLPLEIAIKLFQLFVIRDLITKRATSNVRIAKRKIWEKEPIVWEILQEVMRGHPVLLNRAPTLHRLGIQAFQPTLVEGRTICLHPLVCKGFNADFDGDQMAVHLPLSLEAQAEARLLMFSHMNLLSPAIGDPICVPTQDMLIGLYVLTIGNRRGICANRYNSCGNYPNQKVNYNNNNPKYTKDKESLFSSSYDALGAYRQKQICLDSPLWLRWKLDQRVIGLREVPIEVQYESLGTYREIYAHYLVVGNRKKEIRSIYIRTTLGHISFYREIEEAIQGFSQAYSYTI.

Cys-69, Cys-71, Cys-87, and Cys-90 together coordinate Zn(2+). Mg(2+) contacts are provided by Asp-489, Asp-491, and Asp-493.

Belongs to the RNA polymerase beta' chain family. RpoC1 subfamily. In terms of assembly, in plastids the minimal PEP RNA polymerase catalytic core is composed of four subunits: alpha, beta, beta', and beta''. When a (nuclear-encoded) sigma factor is associated with the core the holoenzyme is formed, which can initiate transcription. Requires Mg(2+) as cofactor. The cofactor is Zn(2+).

It is found in the plastid. The protein localises to the chloroplast. It carries out the reaction RNA(n) + a ribonucleoside 5'-triphosphate = RNA(n+1) + diphosphate. DNA-dependent RNA polymerase catalyzes the transcription of DNA into RNA using the four ribonucleoside triphosphates as substrates. In Oryza nivara (Indian wild rice), this protein is DNA-directed RNA polymerase subunit beta'.